The chain runs to 293 residues: Cep170-like protein (293 aa).

2 disordered regions span residues 78 to 110 and 217 to 270; these read PPLV…LTIT and FPSA…AESE. A compositionally biased stretch (polar residues) spans 227-245; that stretch reads KQKSSPVNNHHSPGQTPTL.

This sequence belongs to the CEP170 family.

This Homo sapiens (Human) protein is Cep170-like protein (CEP170P1).